The following is a 364-amino-acid chain: Poly(3-hydroxyalkanoate) polymerase subunit PhaE (364 aa).

Residues Ser-322–Asp-364 form a disordered region. The segment covering Lys-324–Lys-338 has biased composition (low complexity).

Belongs to the PHA/PHB synthase family. Type III PhaE subfamily. In terms of assembly, forms a heterodimer with PhaC, which may multimerize in the presence of 3-hydroxybutyryl-CoA.

Its subcellular location is the cytoplasm. It participates in biopolymer metabolism; poly-(R)-3-hydroxybutanoate biosynthesis. Polymerizes D(-)-3-hydroxybutyryl-CoA to create polyhydroxybutyrate (PHB) which consists of thousands of hydroxybutyrate molecules linked end to end. This subunit has no catalytic activity but enhances the activity of PhaC, the catalytic subunit. This Thiocystis violacea protein is Poly(3-hydroxyalkanoate) polymerase subunit PhaE.